The chain runs to 180 residues: Nucleoside-triphosphatase THEP1 (180 aa).

Residues 9–16 (GRPGIGKT) and 99–106 (VVIVDEVG) each bind ATP.

Belongs to the THEP1 NTPase family.

The catalysed reaction is a ribonucleoside 5'-triphosphate + H2O = a ribonucleoside 5'-diphosphate + phosphate + H(+). Has nucleotide phosphatase activity towards ATP, GTP, CTP, TTP and UTP. May hydrolyze nucleoside diphosphates with lower efficiency. This Methanopyrus kandleri (strain AV19 / DSM 6324 / JCM 9639 / NBRC 100938) protein is Nucleoside-triphosphatase THEP1.